A 337-amino-acid chain; its full sequence is Phosphatidate cytidylyltransferase, mitochondrial (337 aa).

It belongs to the TAM41 family. The cofactor is Mg(2+). As to expression, brain and liver.

The protein resides in the mitochondrion inner membrane. It catalyses the reaction a 1,2-diacyl-sn-glycero-3-phosphate + CTP + H(+) = a CDP-1,2-diacyl-sn-glycerol + diphosphate. Its pathway is phospholipid metabolism; CDP-diacylglycerol biosynthesis; CDP-diacylglycerol from sn-glycerol 3-phosphate: step 3/3. Catalyzes the conversion of phosphatidic acid (PA) to CDP-diacylglycerol (CDP-DAG), an essential intermediate in the synthesis of phosphatidylglycerol, cardiolipin and phosphatidylinositol. This is Phosphatidate cytidylyltransferase, mitochondrial (Tamm41) from Rattus norvegicus (Rat).